The chain runs to 263 residues: Alpha-tubulin N-acetyltransferase 2 (263 aa).

The N-acetyltransferase domain occupies 1–181 (MEIAFDLSSI…NKYAVFPNFF (181 aa)). 115–128 (FFIVPTEQRSGNGF) contacts acetyl-CoA. Disordered stretches follow at residues 191–224 (TPRQ…RPRH) and 236–263 (FPRG…EPIW). Positions 200-212 (RASSAVSSHTTSR) are enriched in low complexity. Residues 253–263 (LTRDQRHEPIW) are compositionally biased toward basic and acidic residues.

Belongs to the acetyltransferase ATAT1 family.

It catalyses the reaction L-lysyl-[alpha-tubulin] + acetyl-CoA = N(6)-acetyl-L-lysyl-[alpha-tubulin] + CoA + H(+). In terms of biological role, specifically acetylates 'Lys-40' in alpha-tubulin/mec-12 on the lumenal side of microtubules. Promotes microtubule destabilization and accelerates microtubule dynamics; this activity may be independent of acetylation activity. Acetylates alpha-tubulin with a slow enzymatic rate, due to a catalytic site that is not optimized for acetyl transfer. Enters the microtubule through each end and diffuses quickly throughout the lumen of microtubules. Acetylates only long/old microtubules because of its slow acetylation rate since it does not have time to act on dynamically unstable microtubules before the enzyme is released. Required for the maintenance of touch receptor neurons and possibly other type of neurons involved in locomotion. This chain is Alpha-tubulin N-acetyltransferase 2 (atat-2), found in Caenorhabditis briggsae.